Here is a 207-residue protein sequence, read N- to C-terminus: Large ribosomal subunit protein uL4 (207 aa).

Residues 47 to 77 form a disordered region; it reads GTADTKTRAEVSGGGRKPWRQKGTGRARHGS. The segment covering 63-77 has biased composition (basic residues); that stretch reads KPWRQKGTGRARHGS.

Belongs to the universal ribosomal protein uL4 family. Part of the 50S ribosomal subunit.

Its function is as follows. One of the primary rRNA binding proteins, this protein initially binds near the 5'-end of the 23S rRNA. It is important during the early stages of 50S assembly. It makes multiple contacts with different domains of the 23S rRNA in the assembled 50S subunit and ribosome. Forms part of the polypeptide exit tunnel. In Symbiobacterium thermophilum (strain DSM 24528 / JCM 14929 / IAM 14863 / T), this protein is Large ribosomal subunit protein uL4.